A 420-amino-acid polypeptide reads, in one-letter code: Acetyl-CoA acetyltransferase, mitochondrial (420 aa).

A mitochondrion-targeting transit peptide spans 1 to 33; the sequence is MAFCGPRTAARLSHSTRALHYTHRGHVSQRTLN. The active-site Acyl-thioester intermediate is the Cys-119. CoA is bound by residues Tyr-212, 251–253, and Lys-256; that span reads RVD. Residue Tyr-212 coordinates K(+). The K(+) site is built by Ala-273, Ala-274, and Ala-276. Ser-277 contributes to the CoA binding site. Position 374 (Val-374) interacts with K(+). Cys-406 functions as the Proton donor/acceptor in the catalytic mechanism.

It belongs to the thiolase-like superfamily. Thiolase family. In terms of assembly, homotetramer.

Its subcellular location is the mitochondrion. The enzyme catalyses 2 acetyl-CoA = acetoacetyl-CoA + CoA. It catalyses the reaction propanoyl-CoA + acetyl-CoA = 2-methyl-3-oxobutanoyl-CoA + CoA. It participates in lipid metabolism; fatty acid beta-oxidation. Functionally, this is one of the enzymes that catalyzes the last step of the mitochondrial beta-oxidation pathway, an aerobic process breaking down fatty acids into acetyl-CoA. Using free coenzyme A/CoA, catalyzes the thiolytic cleavage of medium- to long-chain 3-oxoacyl-CoAs into acetyl-CoA and a fatty acyl-CoA shortened by two carbon atoms. The activity of the enzyme is reversible and it can also catalyze the condensation of two acetyl-CoA molecules into acetoacetyl-CoA. Thereby, it plays a major role in ketone body metabolism. This Xenopus tropicalis (Western clawed frog) protein is Acetyl-CoA acetyltransferase, mitochondrial (acat1).